We begin with the raw amino-acid sequence, 368 residues long: Quinolinate synthase (368 aa).

H46 and S63 together coordinate iminosuccinate. C110 contacts [4Fe-4S] cluster. Iminosuccinate contacts are provided by residues 141-143 (YVN) and S162. C230 is a binding site for [4Fe-4S] cluster. Residues 256-258 (HPE) and T273 each bind iminosuccinate. [4Fe-4S] cluster is bound at residue C320.

The protein belongs to the quinolinate synthase family. Type 3 subfamily. Requires [4Fe-4S] cluster as cofactor.

It localises to the cytoplasm. The enzyme catalyses iminosuccinate + dihydroxyacetone phosphate = quinolinate + phosphate + 2 H2O + H(+). Its pathway is cofactor biosynthesis; NAD(+) biosynthesis; quinolinate from iminoaspartate: step 1/1. Its function is as follows. Catalyzes the condensation of iminoaspartate with dihydroxyacetone phosphate to form quinolinate. The chain is Quinolinate synthase from Bacillus cytotoxicus (strain DSM 22905 / CIP 110041 / 391-98 / NVH 391-98).